The sequence spans 147 residues: Ribonuclease H (147 aa).

The 142-residue stretch at 1–142 folds into the RNase H type-1 domain; it reads MKKVSIYTDG…CDKLATDEIK (142 aa). Mg(2+) contacts are provided by Asp9, Glu47, Asp69, and Asp134.

It belongs to the RNase H family. Monomer. It depends on Mg(2+) as a cofactor.

The protein localises to the cytoplasm. It catalyses the reaction Endonucleolytic cleavage to 5'-phosphomonoester.. In terms of biological role, endonuclease that specifically degrades the RNA of RNA-DNA hybrids. The sequence is that of Ribonuclease H from Acetivibrio thermocellus (strain ATCC 27405 / DSM 1237 / JCM 9322 / NBRC 103400 / NCIMB 10682 / NRRL B-4536 / VPI 7372) (Clostridium thermocellum).